The primary structure comprises 574 residues: Proline--tRNA ligase (574 aa).

Belongs to the class-II aminoacyl-tRNA synthetase family. ProS type 1 subfamily. In terms of assembly, homodimer.

The protein resides in the cytoplasm. It carries out the reaction tRNA(Pro) + L-proline + ATP = L-prolyl-tRNA(Pro) + AMP + diphosphate. Its function is as follows. Catalyzes the attachment of proline to tRNA(Pro) in a two-step reaction: proline is first activated by ATP to form Pro-AMP and then transferred to the acceptor end of tRNA(Pro). As ProRS can inadvertently accommodate and process non-cognate amino acids such as alanine and cysteine, to avoid such errors it has two additional distinct editing activities against alanine. One activity is designated as 'pretransfer' editing and involves the tRNA(Pro)-independent hydrolysis of activated Ala-AMP. The other activity is designated 'posttransfer' editing and involves deacylation of mischarged Ala-tRNA(Pro). The misacylated Cys-tRNA(Pro) is not edited by ProRS. This chain is Proline--tRNA ligase, found in Nitratidesulfovibrio vulgaris (strain ATCC 29579 / DSM 644 / CCUG 34227 / NCIMB 8303 / VKM B-1760 / Hildenborough) (Desulfovibrio vulgaris).